We begin with the raw amino-acid sequence, 310 residues long: Glutaminase 1 (310 aa).

Residues serine 66, asparagine 117, glutamate 161, asparagine 168, tyrosine 192, tyrosine 244, and valine 262 each contribute to the substrate site. An N6-acetyllysine modification is found at lysine 294.

The protein belongs to the glutaminase family. Homotetramer.

It carries out the reaction L-glutamine + H2O = L-glutamate + NH4(+). This chain is Glutaminase 1, found in Shigella flexneri.